The chain runs to 318 residues: 2-keto-3-deoxygluconate permease (318 aa).

The next 10 membrane-spanning stretches (helical) occupy residues I10 to P30, G42 to I62, V76 to L96, L105 to L125, A139 to G159, G162 to F182, V199 to I219, F224 to A244, A263 to V283, and A289 to W309.

The protein belongs to the KdgT transporter family.

The protein localises to the cell inner membrane. It catalyses the reaction 2-dehydro-3-deoxy-D-gluconate(in) + H(+)(in) = 2-dehydro-3-deoxy-D-gluconate(out) + H(+)(out). In terms of biological role, catalyzes the proton-dependent uptake of 2-keto-3-deoxygluconate (KDG) into the cell. The protein is 2-keto-3-deoxygluconate permease of Pectobacterium carotovorum subsp. carotovorum (strain PC1).